The primary structure comprises 621 residues: Chaperone protein HtpG (621 aa).

Residues 1 to 328 (MTQEKKKFDA…SEDLPLNISR (328 aa)) are a; substrate-binding. A b region spans residues 329-544 (ESLQHNNVLE…DTAMDIRMER (216 aa)). Positions 545–621 (FLIEQKQIAN…LNDILQKAIL (77 aa)) are c.

Belongs to the heat shock protein 90 family. In terms of assembly, homodimer.

The protein resides in the cytoplasm. Molecular chaperone. Has ATPase activity. The sequence is that of Chaperone protein HtpG from Rickettsia prowazekii (strain Madrid E).